Reading from the N-terminus, the 77-residue chain is Large ribosomal subunit protein bL28 (77 aa).

The protein belongs to the bacterial ribosomal protein bL28 family.

The chain is Large ribosomal subunit protein bL28 from Cupriavidus necator (strain ATCC 17699 / DSM 428 / KCTC 22496 / NCIMB 10442 / H16 / Stanier 337) (Ralstonia eutropha).